We begin with the raw amino-acid sequence, 392 residues long: UPF0229 protein CPE1333 (392 aa).

Residues 75–100 (VTTGTGEERRGDRISSDKRKAISNNK) are disordered. The span at 80–94 (GEERRGDRISSDKRK) shows a compositional bias: basic and acidic residues.

Belongs to the UPF0229 family.

The polypeptide is UPF0229 protein CPE1333 (Clostridium perfringens (strain 13 / Type A)).